The sequence spans 471 residues: Apyrase 1 (471 aa).

At 1-21 the chain is on the cytoplasmic side; sequence MTAKRAIGRHESLADKVHRHR. A helical; Signal-anchor for type II membrane protein transmembrane segment spans residues 22 to 42; the sequence is GLLLVISIPIVLIALVLLLMP. The Lumenal portion of the chain corresponds to 43-471; that stretch reads GTSTSVSVIE…GSAIEAVSSP (429 aa). 72–82 contacts ATP; the sequence is VIFDAGSSGSR. E194 functions as the Proton acceptor in the catalytic mechanism. 218 to 228 is an ATP binding site; the sequence is GVVDLGGGSVQ. A glycan (N-linked (GlcNAc...) asparagine) is linked at N333.

This sequence belongs to the GDA1/CD39 NTPase family. The cofactor is Ca(2+). As to expression, expressed in roots, root hairs, root cap, leaves, stems, trichomes, phloem throughout the plant, guard cells, filaments of young stamens, stipules, papillae of stigmas, pollen, pollen tubes and the abscission zone of siliques.

Its subcellular location is the golgi apparatus membrane. It is found in the membrane. The catalysed reaction is a ribonucleoside 5'-triphosphate + 2 H2O = a ribonucleoside 5'-phosphate + 2 phosphate + 2 H(+). In terms of biological role, catalyzes the hydrolysis of phosphoanhydride bonds of nucleoside tri- and di-phosphates. Substrate preference is ATP &gt; ADP. Functions with APY2 to reduce extracellular ATP level which is essential for pollen germination and normal plant development. Plays a role in the regulation of stomatal function by modulating extracellular ATP levels in guard cells. The chain is Apyrase 1 (APY1) from Arabidopsis thaliana (Mouse-ear cress).